Here is a 773-residue protein sequence, read N- to C-terminus: DC-STAMP domain-containing protein 2 (773 aa).

Topologically, residues 1–26 are cytoplasmic; that stretch reads MPKVMKDVVHPLGGEEPSMARAVVRS. Residues 27–47 traverse the membrane as a helical segment; it reads VGGFTLGLSLATAYGLLELLV. Topologically, residues 48 to 51 are extracellular; sequence EGHS. A helical membrane pass occupies residues 52-72; that stretch reads PWGCLVGTLTLAAFLSLGMGF. Residues 73–233 are Cytoplasmic-facing; sequence SRQVRATVLL…IPQAYHLCYV (161 aa). The helical transmembrane segment at 234–254 threads the bilayer; it reads LMPFKLALCGLASLVQVFCVI. The Extracellular segment spans residues 255–322; sequence PKYIQPFLRQ…SMKLHRVREA (68 aa). Asn-284 and Asn-296 each carry an N-linked (GlcNAc...) asparagine glycan. The helical transmembrane segment at 323–343 threads the bilayer; it reads LALMGFTTPLLLVLLYLQALF. Over 344–415 the chain is Cytoplasmic; the sequence is YRYCYLNWDH…ILETFNLIRH (72 aa). Residues 416 to 436 traverse the membrane as a helical segment; that stretch reads LLLVLFLVFLDYAVFWVLDLA. At 437–499 the chain is on the extracellular side; it reads RHQLQGEIVA…LRPSEPDSTG (63 aa). The N-linked (GlcNAc...) asparagine glycan is linked to Asn-480. Residues 500-520 form a helical membrane-spanning segment; the sequence is YIVIGVMYGLCFFITLFGSYV. Residues 521-773 lie on the Cytoplasmic side of the membrane; the sequence is SRLRRVICAS…LPDPSHPPPK (253 aa). Low complexity predominate over residues 692–701; that stretch reads SLSMESTSES. A disordered region spans residues 692–773; it reads SLSMESTSES…LPDPSHPPPK (82 aa). Residues 758–773 are compositionally biased toward pro residues; that stretch reads PLSPPSLPDPSHPPPK.

Interacts with DCST1.

The protein resides in the cytoplasmic vesicle. It is found in the secretory vesicle. Its subcellular location is the acrosome membrane. Functionally, essential sperm cell-surface protein required for sperm-egg fusion and fertilization. This Homo sapiens (Human) protein is DC-STAMP domain-containing protein 2 (DCST2).